The chain runs to 211 residues: Probable nicotinate-nucleotide adenylyltransferase (211 aa).

Belongs to the NadD family.

It catalyses the reaction nicotinate beta-D-ribonucleotide + ATP + H(+) = deamido-NAD(+) + diphosphate. It functions in the pathway cofactor biosynthesis; NAD(+) biosynthesis; deamido-NAD(+) from nicotinate D-ribonucleotide: step 1/1. In terms of biological role, catalyzes the reversible adenylation of nicotinate mononucleotide (NaMN) to nicotinic acid adenine dinucleotide (NaAD). The chain is Probable nicotinate-nucleotide adenylyltransferase from Thermoanaerobacter sp. (strain X514).